The chain runs to 526 residues: Bifunctional purine biosynthesis protein PurH (526 aa).

The MGS-like domain occupies 1-145 (MIRTALLSVS…KNHQDVTVLI (145 aa)).

This sequence belongs to the PurH family.

It catalyses the reaction (6R)-10-formyltetrahydrofolate + 5-amino-1-(5-phospho-beta-D-ribosyl)imidazole-4-carboxamide = 5-formamido-1-(5-phospho-D-ribosyl)imidazole-4-carboxamide + (6S)-5,6,7,8-tetrahydrofolate. The catalysed reaction is IMP + H2O = 5-formamido-1-(5-phospho-D-ribosyl)imidazole-4-carboxamide. Its pathway is purine metabolism; IMP biosynthesis via de novo pathway; 5-formamido-1-(5-phospho-D-ribosyl)imidazole-4-carboxamide from 5-amino-1-(5-phospho-D-ribosyl)imidazole-4-carboxamide (10-formyl THF route): step 1/1. It functions in the pathway purine metabolism; IMP biosynthesis via de novo pathway; IMP from 5-formamido-1-(5-phospho-D-ribosyl)imidazole-4-carboxamide: step 1/1. The protein is Bifunctional purine biosynthesis protein PurH of Polynucleobacter necessarius subsp. necessarius (strain STIR1).